A 165-amino-acid polypeptide reads, in one-letter code: Fimbrial protein (165 aa).

A signal peptide spans 1–21 (MRKSASAVAVLALIACGSAHA).

Its subcellular location is the fimbrium. Functionally, structural subunit of the sef14 fimbriae. In Salmonella enteritidis, this protein is Fimbrial protein (sefA).